A 465-amino-acid polypeptide reads, in one-letter code: Glutamate--tRNA ligase 2 (465 aa).

The short motif at 8–18 is the 'HIGH' region element; it reads PSPTGLMHLGN. Residues 249-253 carry the 'KMSKS' region motif; the sequence is PLSKR. Lysine 252 provides a ligand contact to ATP.

Belongs to the class-I aminoacyl-tRNA synthetase family. Glutamate--tRNA ligase type 1 subfamily. In terms of assembly, monomer.

It is found in the cytoplasm. It catalyses the reaction tRNA(Glu) + L-glutamate + ATP = L-glutamyl-tRNA(Glu) + AMP + diphosphate. Functionally, catalyzes the attachment of glutamate to tRNA(Glu) in a two-step reaction: glutamate is first activated by ATP to form Glu-AMP and then transferred to the acceptor end of tRNA(Glu). In Coxiella burnetii (strain CbuK_Q154) (Coxiella burnetii (strain Q154)), this protein is Glutamate--tRNA ligase 2.